The primary structure comprises 132 residues: uncharacterized protein (132 aa).

In terms of domain architecture, BIG2 spans Val45–Lys115.

To B.anthracis BA1245.

This is an uncharacterized protein from Bacillus cereus (strain ATCC 14579 / DSM 31 / CCUG 7414 / JCM 2152 / NBRC 15305 / NCIMB 9373 / NCTC 2599 / NRRL B-3711).